The chain runs to 160 residues: UPF0178 protein BB1267 (160 aa).

This sequence belongs to the UPF0178 family.

The sequence is that of UPF0178 protein BB1267 from Bordetella bronchiseptica (strain ATCC BAA-588 / NCTC 13252 / RB50) (Alcaligenes bronchisepticus).